The primary structure comprises 611 residues: Methionine--tRNA ligase (611 aa).

The 'HIGH' region signature appears at 12–22 (PYANGPRHIGH). Zn(2+) contacts are provided by C144, C147, C157, and C160. Residues 348-352 (KFSSS) carry the 'KMSKS' region motif. ATP is bound at residue S351.

This sequence belongs to the class-I aminoacyl-tRNA synthetase family. MetG type 1 subfamily. Monomer. Requires Zn(2+) as cofactor.

It is found in the cytoplasm. It carries out the reaction tRNA(Met) + L-methionine + ATP = L-methionyl-tRNA(Met) + AMP + diphosphate. Is required not only for elongation of protein synthesis but also for the initiation of all mRNA translation through initiator tRNA(fMet) aminoacylation. The protein is Methionine--tRNA ligase of Corynebacterium urealyticum (strain ATCC 43042 / DSM 7109).